Consider the following 178-residue polypeptide: NAD(P)H-quinone oxidoreductase subunit J (178 aa).

It belongs to the complex I 30 kDa subunit family. In terms of assembly, NDH-1 can be composed of about 15 different subunits; different subcomplexes with different compositions have been identified which probably have different functions.

It localises to the cellular thylakoid membrane. The enzyme catalyses a plastoquinone + NADH + (n+1) H(+)(in) = a plastoquinol + NAD(+) + n H(+)(out). It carries out the reaction a plastoquinone + NADPH + (n+1) H(+)(in) = a plastoquinol + NADP(+) + n H(+)(out). Functionally, NDH-1 shuttles electrons from an unknown electron donor, via FMN and iron-sulfur (Fe-S) centers, to quinones in the respiratory and/or the photosynthetic chain. The immediate electron acceptor for the enzyme in this species is believed to be plastoquinone. Couples the redox reaction to proton translocation, and thus conserves the redox energy in a proton gradient. Cyanobacterial NDH-1 also plays a role in inorganic carbon-concentration. This chain is NAD(P)H-quinone oxidoreductase subunit J, found in Crocosphaera subtropica (strain ATCC 51142 / BH68) (Cyanothece sp. (strain ATCC 51142)).